We begin with the raw amino-acid sequence, 348 residues long: Protein pelota homolog (348 aa).

This sequence belongs to the eukaryotic release factor 1 family. Pelota subfamily. Monomer. A divalent metal cation is required as a cofactor.

It is found in the cytoplasm. Functionally, may function in recognizing stalled ribosomes, interact with stem-loop structures in stalled mRNA molecules, and effect endonucleolytic cleavage of the mRNA. May play a role in the release non-functional ribosomes and degradation of damaged mRNAs. Has endoribonuclease activity. In Methanococcus maripaludis (strain C6 / ATCC BAA-1332), this protein is Protein pelota homolog.